A 237-amino-acid polypeptide reads, in one-letter code: 5'-methylthioadenosine/S-adenosylhomocysteine nucleosidase (237 aa).

Catalysis depends on Glu-12, which acts as the Proton acceptor. Substrate contacts are provided by residues Ala-78, Ile-152, and 173–174; that span reads ME. The active-site Proton donor is Asp-197.

The protein belongs to the PNP/UDP phosphorylase family. MtnN subfamily. As to quaternary structure, homodimer.

The enzyme catalyses S-adenosyl-L-homocysteine + H2O = S-(5-deoxy-D-ribos-5-yl)-L-homocysteine + adenine. It catalyses the reaction S-methyl-5'-thioadenosine + H2O = 5-(methylsulfanyl)-D-ribose + adenine. The catalysed reaction is 5'-deoxyadenosine + H2O = 5-deoxy-D-ribose + adenine. It participates in amino-acid biosynthesis; L-methionine biosynthesis via salvage pathway; S-methyl-5-thio-alpha-D-ribose 1-phosphate from S-methyl-5'-thioadenosine (hydrolase route): step 1/2. Catalyzes the irreversible cleavage of the glycosidic bond in both 5'-methylthioadenosine (MTA) and S-adenosylhomocysteine (SAH/AdoHcy) to adenine and the corresponding thioribose, 5'-methylthioribose and S-ribosylhomocysteine, respectively. Also cleaves 5'-deoxyadenosine, a toxic by-product of radical S-adenosylmethionine (SAM) enzymes, into 5-deoxyribose and adenine. Thus, is required for in vivo function of the radical SAM enzymes biotin synthase and lipoic acid synthase, that are inhibited by 5'-deoxyadenosine accumulation. This chain is 5'-methylthioadenosine/S-adenosylhomocysteine nucleosidase, found in Hamiltonella defensa subsp. Acyrthosiphon pisum (strain 5AT).